We begin with the raw amino-acid sequence, 56 residues long: Large ribosomal subunit protein eL37 (56 aa).

The Zn(2+) site is built by cysteine 19, cysteine 22, cysteine 34, and cysteine 37. The C4-type zinc finger occupies 19–37; sequence CRRCGRLSYNFNRKTCVAC.

This sequence belongs to the eukaryotic ribosomal protein eL37 family. Zn(2+) serves as cofactor.

Functionally, binds to the 23S rRNA. The sequence is that of Large ribosomal subunit protein eL37 from Methanothrix thermoacetophila (strain DSM 6194 / JCM 14653 / NBRC 101360 / PT) (Methanosaeta thermophila).